Here is a 169-residue protein sequence, read N- to C-terminus: Ribosomal RNA large subunit methyltransferase H (169 aa).

Residues L85, G117, and 136–141 contribute to the S-adenosyl-L-methionine site; that span reads LGELTW.

This sequence belongs to the RNA methyltransferase RlmH family. In terms of assembly, homodimer.

It is found in the cytoplasm. It catalyses the reaction pseudouridine(1915) in 23S rRNA + S-adenosyl-L-methionine = N(3)-methylpseudouridine(1915) in 23S rRNA + S-adenosyl-L-homocysteine + H(+). Functionally, specifically methylates the pseudouridine at position 1915 (m3Psi1915) in 23S rRNA. The sequence is that of Ribosomal RNA large subunit methyltransferase H from Brucella ovis (strain ATCC 25840 / 63/290 / NCTC 10512).